The following is a 562-amino-acid chain: Zinc finger protein 579 (562 aa).

Residues 1–11 (MDPQPPPPAQG) are compositionally biased toward pro residues. The segment at 1–43 (MDPQPPPPAQGSPPHRGRGRGRGRGRGRGRGRGRGGAGAPRAP) is disordered. The span at 15–33 (HRGRGRGRGRGRGRGRGRG) shows a compositional bias: basic residues. 3 consecutive C2H2-type zinc fingers follow at residues 44–66 (LPCPTCGRLFRFPYYLSRHRLSH), 72–94 (HACPLCPKAFRRPAHLSRHLRGH), and 100–123 (LRCAACPRTFPEPAQLRRHLAQEH). Residue Arg-92 is modified to Omega-N-methylarginine. Residues 139–203 (TAEPSWGPQD…SESEEAEAGA (65 aa)) are disordered. 2 positions are modified to phosphoserine: Ser-194 and Ser-196. 2 C2H2-type zinc fingers span residues 270–292 (HQCSICLKAFARPWSLSRHRLVH) and 298–320 (FVCPDCGLAFRLASYLRQHRRVH). The tract at residues 327–379 (APLPAAGKKDDKASGARNSAKGPEGGEGAECGGASEGGEGQNGGDAAPARPPA) is disordered. Residues 349–369 (PEGGEGAECGGASEGGEGQNG) are compositionally biased toward gly residues. C2H2-type zinc fingers lie at residues 384–406 (FWCPECGKGFRRRAHLRQHGVTH), 412–434 (FQCVRCQREFKRLADLARHAQVH), and 441–463 (HPCPRCPRRFSRAYSLLRHQRCH). The disordered stretch occupies residues 477–562 (QAQAPTSPPP…HLRGLGGLAS (86 aa)). Pro residues-rich tracts occupy residues 482 to 491 (TSPPPPPPPL) and 512 to 525 (PSPGTPPQSPPAPP). Position 483 is a phosphoserine (Ser-483).

Belongs to the krueppel C2H2-type zinc-finger protein family.

Its subcellular location is the nucleus. Its function is as follows. May be involved in transcriptional regulation. This is Zinc finger protein 579 (ZNF579) from Homo sapiens (Human).